The following is a 217-amino-acid chain: Uracil-DNA glycosylase (217 aa).

Asp-62 serves as the catalytic Proton acceptor.

Belongs to the uracil-DNA glycosylase (UDG) superfamily. UNG family.

The protein localises to the cytoplasm. The enzyme catalyses Hydrolyzes single-stranded DNA or mismatched double-stranded DNA and polynucleotides, releasing free uracil.. In terms of biological role, excises uracil residues from the DNA which can arise as a result of misincorporation of dUMP residues by DNA polymerase or due to deamination of cytosine. This chain is Uracil-DNA glycosylase, found in Streptococcus pneumoniae serotype 19F (strain G54).